A 371-amino-acid polypeptide reads, in one-letter code: uncharacterized protein (371 aa).

Transmembrane regions (helical) follow at residues 4 to 24 (LPML…FIYG), 60 to 82 (LIQL…ALYG), 87 to 109 (LWIV…MLSI), 130 to 150 (VFIN…FVAS), 197 to 217 (VVAV…LLPV), 224 to 244 (IYPL…YGLV), 282 to 302 (VPIW…GFHA), and 320 to 340 (FIFY…CMVG).

This sequence belongs to the peptide transporter carbon starvation (CstA) (TC 2.A.114) family.

The protein resides in the cell membrane. This is an uncharacterized protein from Haemophilus influenzae (strain ATCC 51907 / DSM 11121 / KW20 / Rd).